The chain runs to 490 residues: Glutamyl-tRNA(Gln) amidotransferase subunit A (490 aa).

Residues Lys78 and Ser153 each act as charge relay system in the active site. Ser177 acts as the Acyl-ester intermediate in catalysis.

This sequence belongs to the amidase family. GatA subfamily. Heterotrimer of A, B and C subunits.

The enzyme catalyses L-glutamyl-tRNA(Gln) + L-glutamine + ATP + H2O = L-glutaminyl-tRNA(Gln) + L-glutamate + ADP + phosphate + H(+). Allows the formation of correctly charged Gln-tRNA(Gln) through the transamidation of misacylated Glu-tRNA(Gln) in organisms which lack glutaminyl-tRNA synthetase. The reaction takes place in the presence of glutamine and ATP through an activated gamma-phospho-Glu-tRNA(Gln). This Desulforapulum autotrophicum (strain ATCC 43914 / DSM 3382 / VKM B-1955 / HRM2) (Desulfobacterium autotrophicum) protein is Glutamyl-tRNA(Gln) amidotransferase subunit A.